We begin with the raw amino-acid sequence, 347 residues long: Galactoside alpha-(1,2)-fucosyltransferase 2 (347 aa).

At 1–5 (MASAQ) the chain is on the cytoplasmic side. Residues 6–26 (VPFSFPLAHFLIFVFVTSTII) form a helical; Signal-anchor for type II membrane protein membrane-spanning segment. The Lumenal portion of the chain corresponds to 27–347 (HLQQRIVKLQ…PADLSPLLKH (321 aa)). N-linked (GlcNAc...) asparagine glycans are attached at residues asparagine 192, asparagine 258, asparagine 286, and asparagine 312.

It belongs to the glycosyltransferase 11 family. In terms of tissue distribution, expressed in stomach, colon, ovary and uterus, specifically in luminal uterine epithelium. Expressed in various tissues including heart, liver, kidney, testis, epididymis, small intestine,and cecum. Expressed in duodenum, jejunum and ileum.

The protein resides in the golgi apparatus. Its subcellular location is the golgi stack membrane. It carries out the reaction a beta-D-galactosyl-(1-&gt;3)-N-acetyl-beta-D-glucosaminyl derivative + GDP-beta-L-fucose = an alpha-L-Fuc-(1-&gt;2)-beta-D-Gal-(1-&gt;3)-beta-D-GlcNAc derivative + GDP + H(+). The enzyme catalyses a beta-D-galactosyl-(1-&gt;4)-N-acetyl-beta-D-glucosaminyl derivative + GDP-beta-L-fucose = an alpha-L-Fuc-(1-&gt;2)-beta-D-Gal-(1-&gt;4)-beta-D-GlcNAc derivative + GDP + H(+). It catalyses the reaction a neolactoside nLc4Cer + GDP-beta-L-fucose = a neolactoside IV(2)-alpha-Fuc-nLc4Cer + GDP + H(+). The catalysed reaction is a neolactoside nLc4Cer(d18:1(4E)) + GDP-beta-L-fucose = a neolactoside IV(2)-alpha-Fuc-nLc4Cer(d18:1(4E)) + GDP + H(+). It carries out the reaction a ganglioside GM1 + GDP-beta-L-fucose = a ganglioside Fuc-GM1 + GDP + H(+). The enzyme catalyses a ganglioside GA1 + GDP-beta-L-fucose = a ganglioside Fuc-GA1 + GDP + H(+). It catalyses the reaction Lc4Cer + GDP-beta-L-fucose = alpha-L-fucosyl-(1-&gt;2)-beta-D-galactosyl-(1-&gt;3)-N-acetyl-beta-D-glucosaminyl-(1-&gt;3)-beta-D-galactosyl-(1-&gt;4)-beta-D-glucosyl-(1&lt;-&gt;1')-ceramide + GDP + H(+). The catalysed reaction is a beta-D-Gal-(1-&gt;3)-beta-D-GlcNAc-(1-&gt;3)-beta-D-Gal-(1-&gt;4)-beta-D-Glc-(1&lt;-&gt;1')-Cer(d18:1(4E)) + GDP-beta-L-fucose = alpha-L-fucosyl-(1-&gt;2)- beta-D-galactosyl-(1-&gt;3)-N-acetyl-beta-D-glucosaminyl-(1-&gt;3)-beta-D-galactosyl-(1-&gt;4)-beta-D-glucosyl-(1&lt;-&gt;1')-N-acylsphing-4-enine + GDP + H(+). It carries out the reaction a ganglioside GD1b + GDP-beta-L-fucose = a ganglioside Fuc-GD1b + GDP + H(+). The enzyme catalyses a ganglioside GM1 (d18:1(4E)) + GDP-beta-L-fucose = a ganglioside Fuc-GM1 (d18:1(4E)) + GDP + H(+). It catalyses the reaction a globoside GalGb4Cer (d18:1(4E)) + GDP-beta-L-fucose = a globoside Globo-H (d18:1(4E)) + GDP + H(+). The catalysed reaction is a lactoside III(4)-a-Fuc-Lc4Cer + GDP-beta-L-fucose = a lactoside IV(2),III(4)-a-[Fuc]2-Lc4Cer + GDP + H(+). It carries out the reaction beta-D-galactosyl-(1-&gt;3)-N-acetyl-D-galactosamine + GDP-beta-L-fucose = alpha-L-fucosyl-(1-&gt;2)-beta-D-galactosyl-(1-&gt;3)-N-acetyl-D-galactosamine + GDP + H(+). Its pathway is protein modification; protein glycosylation. Catalyzes the transfer of L-fucose, from a guanosine diphosphate-beta-L-fucose, to the terminal galactose on both O- and N-linked glycans chains of cell surface glycoproteins and glycolipids and the resulting epitope regulates several processes such as cell-cell interaction including host-microbe interaction, cell surface expression and cell proliferation. Preferentially fucosylates gangliosides GA1 and GM1 in the antrum, cecum and colon and in the female reproductive organs. Fucosylated host glycoproteins or glycolipids mediate interaction with intestinal microbiota influencing its composition. Creates a soluble precursor oligosaccharide FuC-alpha ((1,2)Galbeta-) called the H antigen which is an essential substrate for the final step in the soluble ABO blood group antigen synthesis pathway. The sequence is that of Galactoside alpha-(1,2)-fucosyltransferase 2 from Mus musculus (Mouse).